A 363-amino-acid polypeptide reads, in one-letter code: MSDTSPDYPTLQSIGWPWLGPPEEAAWQAVFAAHPQALPARVVEQHRTGYVVADTPEASVKAESLPEWQRPRFPSHERAAVGDWVLMEGKRIVALLPRRTSIKRGAAGEHYHQQVIAANIDTVFIVCGLDADFNPRRIERYLLLVGGGGAQPVVVLTKADQTEYAEDALAVLEELEAQNIPLRAVNAKDPDSVAALRPWLGDGRTAVLVGSSGAGKSTLTNTLLGTQKMKTNAVRENDSRGRHTTTHRALIPLPSGACLIDTPGMRELKPTGEEDLAEGGFSDVEALAAQCRFNDCAHIAEPGCAVRAAIDAGELDPERVANYMKLRMEVASAAEKLATRVAQNNRGKGSGKRPASVDRPGRH.

A CP-type G domain is found at 112–268 (HQQVIAANID…LIDTPGMREL (157 aa)). Residues 157-160 (TKAD) and 210-218 (GSSGAGKST) each bind GTP. The Zn(2+) site is built by C291, C296, H298, and C304. The segment at 340–363 (RVAQNNRGKGSGKRPASVDRPGRH) is disordered.

This sequence belongs to the TRAFAC class YlqF/YawG GTPase family. RsgA subfamily. In terms of assembly, monomer. Associates with 30S ribosomal subunit, binds 16S rRNA. Zn(2+) serves as cofactor.

It localises to the cytoplasm. In terms of biological role, one of several proteins that assist in the late maturation steps of the functional core of the 30S ribosomal subunit. Helps release RbfA from mature subunits. May play a role in the assembly of ribosomal proteins into the subunit. Circularly permuted GTPase that catalyzes slow GTP hydrolysis, GTPase activity is stimulated by the 30S ribosomal subunit. This is Small ribosomal subunit biogenesis GTPase RsgA from Xanthomonas axonopodis pv. citri (strain 306).